We begin with the raw amino-acid sequence, 1133 residues long: Lysylphosphatidylglycerol biosynthesis bifunctional protein LysX (1133 aa).

The tract at residues 1–626 (MTTVDASPGI…LLHHDGSTPD (626 aa)) is phosphatidylglycerol lysyltransferase. 7 helical membrane-spanning segments follow: residues 43–63 (VPAA…IASV), 82–102 (LFNF…LAAA), 109–129 (IAWL…AVDM), 140–160 (FGEN…VLSY), 177–197 (AVLV…VELF), 233–253 (LNAI…IVLF), and 575–595 (LIPR…LPFS). Residues 627–1133 (VSGLQTADVD…TLPFPLAKPH (507 aa)) form a lysine--tRNA ligase region. Positions 1045 and 1052 each coordinate Mg(2+).

This sequence in the N-terminal section; belongs to the LPG synthetase family. The protein in the C-terminal section; belongs to the class-II aminoacyl-tRNA synthetase family. It depends on Mg(2+) as a cofactor.

The protein localises to the cell membrane. The catalysed reaction is tRNA(Lys) + L-lysine + ATP = L-lysyl-tRNA(Lys) + AMP + diphosphate. The enzyme catalyses L-lysyl-tRNA(Lys) + a 1,2-diacyl-sn-glycero-3-phospho-(1'-sn-glycerol) = a 1,2-diacyl-sn-glycero-3-phospho-1'-(3'-O-L-lysyl)-sn-glycerol + tRNA(Lys). Its function is as follows. Catalyzes the production of L-lysyl-tRNA(Lys)transfer and the transfer of a lysyl group from L-lysyl-tRNA(Lys) to membrane-bound phosphatidylglycerol (PG), which produces lysylphosphatidylglycerol (LPG), one of the components of the bacterial membrane with a positive net charge. LPG synthesis contributes to the resistance to cationic antimicrobial peptides (CAMPs) and likely protects M.tuberculosis against the CAMPs produced by competiting microorganisms (bacteriocins). In fact, the modification of anionic phosphatidylglycerol with positively charged L-lysine results in repulsion of the peptides. The protein is Lysylphosphatidylglycerol biosynthesis bifunctional protein LysX (lysX) of Mycobacterium leprae (strain Br4923).